Consider the following 188-residue polypeptide: MGRYSREPEIAAKSCKARGSNLRVHFKNTCETANAIRKMPLKRAVAYLKNVIGHKECVPFRRFNGGVGRCAQAKQWGTTQGRWPKKSAEFLLQMLRNAESNADYSGLDVDRLVIEHIQVNRAACLRRRTYRAHGRINPYMSSPCHIEMWLTEAESTPEGAKKGKKKKGTKDAVEKSSKRVKTAATAAH.

Positions 155-188 are disordered; the sequence is STPEGAKKGKKKKGTKDAVEKSSKRVKTAATAAH.

The protein belongs to the universal ribosomal protein uL22 family.

This chain is Large ribosomal subunit protein uL22 (RpL17), found in Agriotes lineatus (Lined click beetle).